The following is a 1044-amino-acid chain: Phosphatidylinositol 4,5-bisphosphate 3-kinase catalytic subunit delta isoform (1044 aa).

In terms of domain architecture, PI3K-ABD spans 16–105 (ENQSVVVDFL…LPVLRLVARE (90 aa)). A PI3K-RBD domain is found at 187 to 278 (NRALLVNVKF…GLTPHLTMVH (92 aa)). Residues 287–312 (DEQSNPAPQVQKPRAKPPPIPAKKPS) are disordered. A C2 PI3K-type domain is found at 319-476 (LEQPFRIELI…SAAALLICLP (158 aa)). The PIK helical domain occupies 497 to 674 (HSECVHVTEE…GLILEAYCRG (178 aa)). The residue at position 524 (tyrosine 524) is a Phosphotyrosine. One can recognise a PI3K/PI4K catalytic domain in the interval 745-1027 (CVEQCTFMDS…KFNEALRESW (283 aa)). Residues 751–757 (FMDSKMK) form a G-loop region. Positions 890–898 (GIGDRHSDN) are catalytic loop. The tract at residues 909–935 (HIDFGHFLGNFKTKFGINRERVPFILT) is activation loop. At serine 1039 the chain carries Phosphoserine; by autocatalysis.

The protein belongs to the PI3/PI4-kinase family. In terms of assembly, heterodimer of a catalytic subunit PIK3CD and a p85 regulatory subunit (PIK3R1, PIK3R2 or PIK3R3). Interacts with ERAS. Interacts with HRAS. In terms of processing, autophosphorylation on Ser-1039 results in the almost complete inactivation of the lipid kinase activity. In humans, the highest levels of expression are seen in peripheral blood mononuclear cells, spleen, and thymus, and low levels of expression in testes, uterus, colon, and small intestine but not in other tissues examined including prostate, heart, brain, and liver. Isoform 2 is expressed in normal thymus, lung and spleen tissues, and is detected at low levels in normal lysates from colon and ovarian biopsies, at elevated levels in lysates from colorectal tumors and is abundantly expressed in some ovarian tumors (at protein level). Both isoform 1 and isoform 2 are widely expressed. Isoform 1 is expressed predominantly in leukocytes.

It is found in the cytoplasm. The enzyme catalyses a 1,2-diacyl-sn-glycero-3-phospho-(1D-myo-inositol-4,5-bisphosphate) + ATP = a 1,2-diacyl-sn-glycero-3-phospho-(1D-myo-inositol-3,4,5-trisphosphate) + ADP + H(+). The catalysed reaction is a 1,2-diacyl-sn-glycero-3-phospho-(1D-myo-inositol) + ATP = a 1,2-diacyl-sn-glycero-3-phospho-(1D-myo-inositol-3-phosphate) + ADP + H(+). It catalyses the reaction 1-octadecanoyl-2-(5Z,8Z,11Z,14Z)-eicosatetraenoyl-sn-glycero-3-phospho-1D-myo-inositol 4,5-bisphosphate + ATP = 1-octadecanoyl-2-(5Z,8Z,11Z,14Z-eicosatetraenoyl)-sn-glycero-3-phospho-(1D-myo-inositol 3,4,5-triphosphate) + ADP + H(+). It participates in phospholipid metabolism; phosphatidylinositol phosphate biosynthesis. With respect to regulation, activated by growth factors and cytokine receptors through a tyrosine-kinase-dependent mechanism. Activated by RAS. IC87114 inhibits lipid kinase activity and is selective in cells at doses up to 5-10 uM. IC87114 blocks T-cell receptor signaling in naive and memory T-cells and reduces cytokine production by memory T-cells. Phosphoinositide-3-kinase (PI3K) phosphorylates phosphatidylinositol (PI) and its phosphorylated derivatives at position 3 of the inositol ring to produce 3-phosphoinositides. Uses ATP and PtdIns(4,5)P2 (phosphatidylinositol 4,5-bisphosphate) to generate phosphatidylinositol 3,4,5-trisphosphate (PIP3). PIP3 plays a key role by recruiting PH domain-containing proteins to the membrane, including AKT1 and PDPK1, activating signaling cascades involved in cell growth, survival, proliferation, motility and morphology. Mediates immune responses. Plays a role in B-cell development, proliferation, migration, and function. Required for B-cell receptor (BCR) signaling. Mediates B-cell proliferation response to anti-IgM, anti-CD40 and IL4 stimulation. Promotes cytokine production in response to TLR4 and TLR9. Required for antibody class switch mediated by TLR9. Involved in the antigen presentation function of B-cells. Involved in B-cell chemotaxis in response to CXCL13 and sphingosine 1-phosphate (S1P). Required for proliferation, signaling and cytokine production of naive, effector and memory T-cells. Required for T-cell receptor (TCR) signaling. Mediates TCR signaling events at the immune synapse. Activation by TCR leads to antigen-dependent memory T-cell migration and retention to antigenic tissues. Together with PIK3CG participates in T-cell development. Contributes to T-helper cell expansion and differentiation. Required for T-cell migration mediated by homing receptors SELL/CD62L, CCR7 and S1PR1 and antigen dependent recruitment of T-cells. Together with PIK3CG is involved in natural killer (NK) cell development and migration towards the sites of inflammation. Participates in NK cell receptor activation. Plays a role in NK cell maturation and cytokine production. Together with PIK3CG is involved in neutrophil chemotaxis and extravasation. Together with PIK3CG participates in neutrophil respiratory burst. Plays important roles in mast-cell development and mast cell mediated allergic response. Involved in stem cell factor (SCF)-mediated proliferation, adhesion and migration. Required for allergen-IgE-induced degranulation and cytokine release. The lipid kinase activity is required for its biological function. Isoform 2 may be involved in stabilizing total RAS levels, resulting in increased ERK phosphorylation and increased PI3K activity. This is Phosphatidylinositol 4,5-bisphosphate 3-kinase catalytic subunit delta isoform (PIK3CD) from Homo sapiens (Human).